The chain runs to 359 residues: tRNA-specific 2-thiouridylase MnmA (359 aa).

ATP contacts are provided by residues 10–17 (GISGGVDS) and Leu-36. The active-site Nucleophile is Cys-101. A disulfide bond links Cys-101 and Cys-197. Gly-125 contributes to the ATP binding site. An interaction with tRNA region spans residues 147-149 (KDQ). Cys-197 acts as the Cysteine persulfide intermediate in catalysis. The interaction with tRNA stretch occupies residues 306–307 (RY).

It belongs to the MnmA/TRMU family.

The protein resides in the cytoplasm. It catalyses the reaction S-sulfanyl-L-cysteinyl-[protein] + uridine(34) in tRNA + AH2 + ATP = 2-thiouridine(34) in tRNA + L-cysteinyl-[protein] + A + AMP + diphosphate + H(+). Functionally, catalyzes the 2-thiolation of uridine at the wobble position (U34) of tRNA, leading to the formation of s(2)U34. The polypeptide is tRNA-specific 2-thiouridylase MnmA (Chlorobium chlorochromatii (strain CaD3)).